An 846-amino-acid polypeptide reads, in one-letter code: MASERPREPEGEDSIKLSADVKPFVPKFAGLNVAWSESSEACVFPGCAATYYPFVQESPAAEQKMYPEDMAFGAPAFPAQYVSSEIALHPFAYPTYALESTQSVCSVPTLQYDYSQAQCHPGFRPAKPRNEHACPPQEAKCVFKKKSSDERRAWEEQKSSNRRADGAVPCEARPARGSCHLKSDGYHKRPDRKSRILTKSASTSKPEFEFSRLDFPELQSPKNSNLPETQKQPRWGPLGPAASNMSLLGEAGKPVADMVEGKMVKTDHTDGAVTNNAATSSPSCTRELSWTPMGYIVRQTVSSDSAAATETVNSIINLKKTTSSADAKNVSVTSEALSSDPSFSREKRVHPGPKAKASQGSELEQNESSKKNKKKKEKSKSSYEVLPVQEPPRIEDAEEFPNLSVASERRHRGESPKLQSKQQAQNDFKTGGKKSQVPVQLDLGGMLAALEKQQHAPHAKPSSRPVVFSVGAVPVLSKDASSGERGRRSSQVKTPHNPLDSSAPLMKKGKQREIPKAKKPTSLKKIILKERQERMQQRLQESAVSPTVASDDSQDVESGVTNQIPSPDNPTGPEKTEEPMSSTPVVEGESEEPAGTEFQRDPEACQPAPDSATFPKIHSRRFRDYCSQMLSKEVDACVTGLLKELVRFQDRMYQKDPVKAKTKRRLVLGLREVLKHLKLRKLKCIIISPNCEKTQSKGGLDDTLHTIIDCACEQNIPFVFALNRKALGRSLNKAVPVSIVGIFSYDGAQDQFHKMVELTMAARQAYKTMLETMRQEQAGEPGPQTPPSPPMQDPIQSTDEGTLASTGEEPHYIEIWRKHLEAYSQHALELEDSLEASTSQMMNLNL.

Basic and acidic residues-rich tracts occupy residues 151–165 (RRAW…RRAD) and 206–215 (PEFEFSRLDF). 5 disordered regions span residues 151-246 (RRAW…SNMS), 266-288 (TDHT…TREL), 321-440 (TTSS…VPVQ), 448-467 (AALE…RPVV), and 475-613 (VLSK…DSAT). Ser220 carries the post-translational modification Phosphoserine. Polar residues-rich tracts occupy residues 220–232 (SPKN…TQKQ), 272–288 (AVTN…TREL), and 321–342 (TTSS…SDPS). A Nuclear localization signal motif is present at residues 370–380 (KKNKKKKEKSK). A compositionally biased stretch (polar residues) spans 417-428 (KLQSKQQAQNDF). Residues 527 to 536 (ILKERQERMQ) are compositionally biased toward basic and acidic residues. Residues 542–551 (SAVSPTVASD) are compositionally biased toward polar residues. The tract at residues 666–687 (LVLGLREVLKHLKLRKLKCIII) is RNA-binding. Positions 774-804 (RQEQAGEPGPQTPPSPPMQDPIQSTDEGTLA) are disordered. Pro residues predominate over residues 783 to 792 (PQTPPSPPMQ).

Ubiquitous.

Its subcellular location is the cytoplasm. It is found in the nucleus. In terms of biological role, mRNA-binding protein that binds to the SECIS (selenocysteine insertion sequence) element present in the 3'-UTR of mRNAs encoding selenoproteins and facilitates the incorporation of the rare amino acid selenocysteine. Insertion of selenocysteine at UGA codons is mediated by SECISBP2 and EEFSEC: SECISBP2 (1) specifically binds the SECIS sequence once the 80S ribosome encounters an in-frame UGA codon and (2) contacts the RPS27A/eS31 of the 40S ribosome before ribosome stalling. (3) GTP-bound EEFSEC then delivers selenocysteinyl-tRNA(Sec) to the 80S ribosome and adopts a preaccommodated state conformation. (4) After GTP hydrolysis, EEFSEC dissociates from the assembly, selenocysteinyl-tRNA(Sec) accommodates, and peptide bond synthesis and selenoprotein elongation occur. The chain is Selenocysteine insertion sequence-binding protein 2 (Secisbp2) from Rattus norvegicus (Rat).